Reading from the N-terminus, the 130-residue chain is LTSLILLVAVQAITEEDLELLRQTSAECKTESGVSEDVIKRARKGDLEDDPKLKMQLLCIFKALEIVAESGEIEADTFKEKLTRVTNDDEESEKIVEKCTVTEDTPEDTAFEVTKCVLKDKPNFFGDLFV.

A signal peptide spans L1–A12. 2 disulfide bridges follow: C28-C59 and C99-C116.

It belongs to the PBP/GOBP family. Post-translationally, N-glycosylated. In terms of tissue distribution, tubular accessory sex gland.

The protein localises to the secreted. Its function is as follows. May be a carrier protein for lipids. In Tenebrio molitor (Yellow mealworm beetle), this protein is B1 protein.